A 551-amino-acid chain; its full sequence is Arginine--tRNA ligase (551 aa).

The 'HIGH' region motif lies at Ala123–Arg133.

This sequence belongs to the class-I aminoacyl-tRNA synthetase family. Monomer.

The protein resides in the cytoplasm. It carries out the reaction tRNA(Arg) + L-arginine + ATP = L-arginyl-tRNA(Arg) + AMP + diphosphate. This Prosthecochloris aestuarii (strain DSM 271 / SK 413) protein is Arginine--tRNA ligase.